We begin with the raw amino-acid sequence, 108 residues long: uncharacterized protein (108 aa).

Residues 72-94 (LGLHTSVFFFLRIVCMSSAASVF) form a helical membrane-spanning segment.

It is found in the membrane. This is an uncharacterized protein from Saccharomyces cerevisiae (strain ATCC 204508 / S288c) (Baker's yeast).